The following is a 187-amino-acid chain: Elongation factor P (187 aa).

Belongs to the elongation factor P family.

Its subcellular location is the cytoplasm. Its pathway is protein biosynthesis; polypeptide chain elongation. Involved in peptide bond synthesis. Stimulates efficient translation and peptide-bond synthesis on native or reconstituted 70S ribosomes in vitro. Probably functions indirectly by altering the affinity of the ribosome for aminoacyl-tRNA, thus increasing their reactivity as acceptors for peptidyl transferase. The sequence is that of Elongation factor P from Corynebacterium urealyticum (strain ATCC 43042 / DSM 7109).